The following is a 177-amino-acid chain: Peptide methionine sulfoxide reductase MsrA (177 aa).

C15 is a catalytic residue.

The protein belongs to the MsrA Met sulfoxide reductase family.

It catalyses the reaction L-methionyl-[protein] + [thioredoxin]-disulfide + H2O = L-methionyl-(S)-S-oxide-[protein] + [thioredoxin]-dithiol. It carries out the reaction [thioredoxin]-disulfide + L-methionine + H2O = L-methionine (S)-S-oxide + [thioredoxin]-dithiol. Its function is as follows. Has an important function as a repair enzyme for proteins that have been inactivated by oxidation. Catalyzes the reversible oxidation-reduction of methionine sulfoxide in proteins to methionine. This chain is Peptide methionine sulfoxide reductase MsrA, found in Listeria monocytogenes serotype 4a (strain HCC23).